Reading from the N-terminus, the 129-residue chain is Large ribosomal subunit protein bL19 (129 aa).

It belongs to the bacterial ribosomal protein bL19 family.

This protein is located at the 30S-50S ribosomal subunit interface and may play a role in the structure and function of the aminoacyl-tRNA binding site. The polypeptide is Large ribosomal subunit protein bL19 (Burkholderia mallei (strain NCTC 10247)).